The following is a 636-amino-acid chain: 1-deoxy-D-xylulose-5-phosphate synthase (636 aa).

Residues His-74 and 115 to 117 (GHA) contribute to the thiamine diphosphate site. Asp-146 lines the Mg(2+) pocket. Thiamine diphosphate is bound by residues 147 to 148 (GA), Asn-175, Tyr-285, and Glu-368. Residue Asn-175 participates in Mg(2+) binding.

This sequence belongs to the transketolase family. DXPS subfamily. Homodimer. Requires Mg(2+) as cofactor. Thiamine diphosphate is required as a cofactor.

It catalyses the reaction D-glyceraldehyde 3-phosphate + pyruvate + H(+) = 1-deoxy-D-xylulose 5-phosphate + CO2. It functions in the pathway metabolic intermediate biosynthesis; 1-deoxy-D-xylulose 5-phosphate biosynthesis; 1-deoxy-D-xylulose 5-phosphate from D-glyceraldehyde 3-phosphate and pyruvate: step 1/1. Functionally, catalyzes the acyloin condensation reaction between C atoms 2 and 3 of pyruvate and glyceraldehyde 3-phosphate to yield 1-deoxy-D-xylulose-5-phosphate (DXP). This chain is 1-deoxy-D-xylulose-5-phosphate synthase, found in Anaeromyxobacter sp. (strain K).